An 89-amino-acid polypeptide reads, in one-letter code: Protein RALF-like 5 (89 aa).

Positions 1-25 are cleaved as a signal peptide; that stretch reads MLKAQVFMFVTVLVFVCVFINSNDA. 2 disulfides stabilise this stretch: C39–C48 and C61–C67.

Belongs to the plant rapid alkalinization factor (RALF) family.

The protein resides in the secreted. Cell signaling peptide that may regulate plant stress, growth, and development. Mediates a rapid alkalinization of extracellular space by mediating a transient increase in the cytoplasmic Ca(2+) concentration leading to a calcium-dependent signaling events through a cell surface receptor and a concomitant activation of some intracellular mitogen-activated protein kinases. The chain is Protein RALF-like 5 (RALFL5) from Arabidopsis thaliana (Mouse-ear cress).